The primary structure comprises 747 residues: Endopolyphosphatase (747 aa).

Methionine 1 is a topological domain (cytoplasmic). A helical; Signal-anchor for type II membrane protein membrane pass occupies residues 2–22 (LPKTLTIWASLASLAVAQSGQ). The Vacuolar portion of the chain corresponds to 23-747 (VVFAKNADGK…AEYLEEPDDD (725 aa)). N-linked (GlcNAc...) asparagine glycans are attached at residues asparagine 134, asparagine 191, and asparagine 463. Residues 570–640 (AVATSSEPES…PKFPKDLQPG (71 aa)) are disordered. Residues 577 to 586 (PESDDYDSDL) show a composition bias toward acidic residues. The segment covering 591–625 (KKGKKKGKKGKKGKKGKKGKKKKGKKGKKGKKGKR) has biased composition (basic residues). Residues 626–635 (DKSMPPKFPK) show a composition bias toward basic and acidic residues. Residue asparagine 659 is glycosylated (N-linked (GlcNAc...) asparagine).

Belongs to the endopolyphosphatase PPN1 family. A divalent metal cation serves as cofactor. Processing by proteases in the vacuole may be required for activation.

The protein localises to the vacuole membrane. The catalysed reaction is [phosphate](n+1) + n H2O = (n+1) phosphate + n H(+). Catalyzes the hydrolysis of inorganic polyphosphate (polyP) chains of many hundreds of phosphate residues into shorter lengths. This is Endopolyphosphatase (PPN1) from Yarrowia lipolytica (strain CLIB 122 / E 150) (Yeast).